A 504-amino-acid chain; its full sequence is PE-PGRS family protein PE_PGRS62 (504 aa).

Residues 4–94 (VVTVPEAVAA…AAYLNTESAN (91 aa)) enclose the PE domain.

The protein belongs to the mycobacterial PE family. PGRS subfamily. In terms of assembly, interacts with host Toll-like receptor 2 (TLR2).

It is found in the secreted. It localises to the cell wall. In terms of biological role, supports mycobacterial virulence via inhibition of phagosome maturation and host inducible nitric oxide synthase (iNOS) expression. May promote the survival within macrophages by disturbing the cytokines profiles and blocking the endoplasmic reticulum (ER) stress-mediated apoptosis. May also affect bacterial cell wall composition. Its function is as follows. Expression in Mycobacterium smegmatis, a nonpathogenic species naturally deficient in PE_PGRS genes, results in enhanced resistance to various in vitro stresses. It also leads to phagosome maturation arrest and increased survival in macrophages. The sequence is that of PE-PGRS family protein PE_PGRS62 from Mycobacterium tuberculosis (strain ATCC 25618 / H37Rv).